We begin with the raw amino-acid sequence, 1472 residues long: Type IV pilus biogenesis factor PilY1 homolog PD_1611 (1472 aa).

Residues Asp-1170, Asp-1172, Asp-1174, Leu-1176, and Asp-1178 each contribute to the Ca(2+) site. Residues 1383–1397 (RGSRSSIGNSDTGAV) show a composition bias toward polar residues. Residues 1383–1403 (RGSRSSIGNSDTGAVSTGGDA) are disordered.

Belongs to the PilY1 family.

It is found in the fimbrium. Functionally, one of the three PilY1 homologs of X.fastidiosa, which are involved in bacterial twitching motility as component of the filamentous type IV pili (T4P). The twitching motility of this protein is enhanced by calcium, which may provide the bacterium an adaptive advantage in environments with high calcium concentrations. This chain is Type IV pilus biogenesis factor PilY1 homolog PD_1611, found in Xylella fastidiosa (strain Temecula1 / ATCC 700964).